We begin with the raw amino-acid sequence, 436 residues long: Trigger factor (436 aa).

In terms of domain architecture, PPIase FKBP-type spans 163-248 (GDRVTVDFEG…LKKIEAAHLP (86 aa)).

It belongs to the FKBP-type PPIase family. Tig subfamily.

It is found in the cytoplasm. It catalyses the reaction [protein]-peptidylproline (omega=180) = [protein]-peptidylproline (omega=0). Involved in protein export. Acts as a chaperone by maintaining the newly synthesized protein in an open conformation. Functions as a peptidyl-prolyl cis-trans isomerase. This Albidiferax ferrireducens (strain ATCC BAA-621 / DSM 15236 / T118) (Rhodoferax ferrireducens) protein is Trigger factor.